The following is a 400-amino-acid chain: Tyrosine--tRNA ligase 2 (400 aa).

Positions 46-55 (PSAPDIHLGH) match the 'HIGH' region motif. Residues 230–234 (KMSKS) carry the 'KMSKS' region motif. Lys-233 is a binding site for ATP. In terms of domain architecture, S4 RNA-binding spans 339–399 (NNLIEAIVKI…GKKKIVKLLV (61 aa)).

Belongs to the class-I aminoacyl-tRNA synthetase family. TyrS type 2 subfamily. Homodimer.

It is found in the cytoplasm. The catalysed reaction is tRNA(Tyr) + L-tyrosine + ATP = L-tyrosyl-tRNA(Tyr) + AMP + diphosphate + H(+). Its function is as follows. Catalyzes the attachment of tyrosine to tRNA(Tyr) in a two-step reaction: tyrosine is first activated by ATP to form Tyr-AMP and then transferred to the acceptor end of tRNA(Tyr). The protein is Tyrosine--tRNA ligase 2 of Clostridium acetobutylicum (strain ATCC 824 / DSM 792 / JCM 1419 / IAM 19013 / LMG 5710 / NBRC 13948 / NRRL B-527 / VKM B-1787 / 2291 / W).